A 447-amino-acid polypeptide reads, in one-letter code: Probable glycine dehydrogenase (decarboxylating) subunit 1 (447 aa).

It belongs to the GcvP family. N-terminal subunit subfamily. In terms of assembly, the glycine cleavage system is composed of four proteins: P, T, L and H. In this organism, the P 'protein' is a heterodimer of two subunits.

It catalyses the reaction N(6)-[(R)-lipoyl]-L-lysyl-[glycine-cleavage complex H protein] + glycine + H(+) = N(6)-[(R)-S(8)-aminomethyldihydrolipoyl]-L-lysyl-[glycine-cleavage complex H protein] + CO2. Functionally, the glycine cleavage system catalyzes the degradation of glycine. The P protein binds the alpha-amino group of glycine through its pyridoxal phosphate cofactor; CO(2) is released and the remaining methylamine moiety is then transferred to the lipoamide cofactor of the H protein. This Halalkalibacterium halodurans (strain ATCC BAA-125 / DSM 18197 / FERM 7344 / JCM 9153 / C-125) (Bacillus halodurans) protein is Probable glycine dehydrogenase (decarboxylating) subunit 1.